The following is a 197-amino-acid chain: Surfactant protein C (197 aa).

Positions 1-23 are excised as a propeptide; it reads MDVGSKEVLMESPPDYSAAPRGR. 2 S-palmitoyl cysteine lipidation sites follow: cysteine 28 and cysteine 29. Residues 59–197 constitute a propeptide that is removed on maturation; that stretch reads HMSQKHTEMV…LCGEVPLYYI (139 aa). One can recognise a BRICHOS domain in the interval 94-197; that stretch reads FSIGSTGLVV…LCGEVPLYYI (104 aa). Disulfide bonds link cysteine 120/cysteine 148 and cysteine 121/cysteine 189.

The protein resides in the secreted. It is found in the extracellular space. The protein localises to the surface film. Functionally, pulmonary surfactant associated proteins promote alveolar stability by lowering the surface tension at the air-liquid interface in the peripheral air spaces. In Homo sapiens (Human), this protein is Surfactant protein C.